A 491-amino-acid chain; its full sequence is Protein nucleotidyltransferase YdiU (491 aa).

ATP contacts are provided by Gly88, Gly90, Arg91, Lys111, Asp123, Gly124, Arg174, and Arg181. Catalysis depends on Asp250, which acts as the Proton acceptor. Mg(2+)-binding residues include Asn251 and Asp260. Asp260 lines the ATP pocket.

It belongs to the SELO family. Mg(2+) is required as a cofactor. Requires Mn(2+) as cofactor.

The catalysed reaction is L-seryl-[protein] + ATP = 3-O-(5'-adenylyl)-L-seryl-[protein] + diphosphate. It carries out the reaction L-threonyl-[protein] + ATP = 3-O-(5'-adenylyl)-L-threonyl-[protein] + diphosphate. It catalyses the reaction L-tyrosyl-[protein] + ATP = O-(5'-adenylyl)-L-tyrosyl-[protein] + diphosphate. The enzyme catalyses L-histidyl-[protein] + UTP = N(tele)-(5'-uridylyl)-L-histidyl-[protein] + diphosphate. The catalysed reaction is L-seryl-[protein] + UTP = O-(5'-uridylyl)-L-seryl-[protein] + diphosphate. It carries out the reaction L-tyrosyl-[protein] + UTP = O-(5'-uridylyl)-L-tyrosyl-[protein] + diphosphate. Functionally, nucleotidyltransferase involved in the post-translational modification of proteins. It can catalyze the addition of adenosine monophosphate (AMP) or uridine monophosphate (UMP) to a protein, resulting in modifications known as AMPylation and UMPylation. This Rhodopseudomonas palustris (strain BisB18) protein is Protein nucleotidyltransferase YdiU.